The primary structure comprises 482 residues: MAADQVTISDEPKGGGVTADAAVKAIKAGRNKDVDIAAQIVSDYADQMDGDTWSVEEERKLIRRIDWRLIPTLFVCATLSGLDKTAISAAAVYNIKTDLNLTGAEYSWIGSAPFFGGLLFMGPLAYCLQRVPAVPFFAFNVLCWGILEMSVTMVVSMWYRPEEQPKRNSIILNVVAPIINGFVAWVVGYYKGPYERWKIIFLLVGALTIVTSVVVYFVLPNNPLEAKFLTPREKYIVIQRKAADNTGIESKTFKMEQVWEAIFDIKTWLIWIAIAALQVPNGGLTTFNTLIISGLGFDSLQTSLLAMPPGAMSTLSGIGLSYLAATTRRYRTAIVTVSILLPLFGAVLCYALPRTNLAGQLVGLYILYTYWAPYVTLVSVYQANVAGHTKKITLYAWFYIAWATGNIIGPQTFRADQAPEYTGGTVAMIICYVVAMFAITAYGVVCHLSNKKRAEAIEARTAADHDWLDMTDKENVGFKYTT.

A helical membrane pass occupies residues 73-93; the sequence is LFVCATLSGLDKTAISAAAVY. N100 carries an N-linked (GlcNAc...) asparagine glycan. The next 9 helical transmembrane spans lie at 108–128, 131–151, 170–190, 199–219, 304–324, 333–353, 361–381, 392–412, and 426–446; these read WIGS…AYCL, VPAV…EMSV, IILN…VGYY, IIFL…YFVL, LLAM…SYLA, AIVT…YALP, LVGL…VSVY, ITLY…GPQT, and VAMI…GVVC.

Belongs to the major facilitator superfamily. Allantoate permease family.

It is found in the cell membrane. Functionally, MFS-type transporter; part of the gene cluster that mediates the biosynthesis of communesins, a prominent class of indole alkaloids with great potential as pharmaceuticals. With the MFS transporter cnsO, is most likely responsible for cummunesins secretion and thereby may contribute to intrinsic resistance. The chain is MFS-type transporter cnsL from Penicillium expansum (Blue mold rot fungus).